A 245-amino-acid polypeptide reads, in one-letter code: Geranylgeranylglyceryl phosphate synthase (245 aa).

2 residues coordinate Mg(2+): Asp22 and Ser51. Residues 169 to 175, 200 to 201, and 222 to 223 each bind sn-glycerol 1-phosphate; these read YLEAGSG, GG, and GT.

It belongs to the GGGP/HepGP synthase family. Group II subfamily. As to quaternary structure, homopentamer. Requires Mg(2+) as cofactor.

The protein resides in the cytoplasm. The catalysed reaction is sn-glycerol 1-phosphate + (2E,6E,10E)-geranylgeranyl diphosphate = sn-3-O-(geranylgeranyl)glycerol 1-phosphate + diphosphate. The protein operates within membrane lipid metabolism; glycerophospholipid metabolism. Inhibited by EDTA in vitro. In terms of biological role, prenyltransferase that catalyzes the transfer of the geranylgeranyl moiety of geranylgeranyl diphosphate (GGPP) to the C3 hydroxyl of sn-glycerol-1-phosphate (G1P). This reaction is the first ether-bond-formation step in the biosynthesis of archaeal membrane lipids. Cannot use sn-glycerol-3-phosphate (G3P) or dihydroxyacetonephosphate (DHAP) as substrate. This chain is Geranylgeranylglyceryl phosphate synthase, found in Methanothermobacter marburgensis (strain ATCC BAA-927 / DSM 2133 / JCM 14651 / NBRC 100331 / OCM 82 / Marburg) (Methanobacterium thermoautotrophicum).